The sequence spans 485 residues: Probable cobyric acid synthase (485 aa).

The 186-residue stretch at 250 to 435 (EIEIAVIRLP…LHGLFDNKNI (186 aa)) folds into the GATase cobBQ-type domain. The active-site Nucleophile is cysteine 328. The active site involves histidine 427.

Belongs to the CobB/CobQ family. CobQ subfamily.

It participates in cofactor biosynthesis; adenosylcobalamin biosynthesis. Catalyzes amidations at positions B, D, E, and G on adenosylcobyrinic A,C-diamide. NH(2) groups are provided by glutamine, and one molecule of ATP is hydrogenolyzed for each amidation. The sequence is that of Probable cobyric acid synthase from Methanosarcina barkeri (strain Fusaro / DSM 804).